The following is a 292-amino-acid chain: Keratin-associated protein 10-9 (292 aa).

25 repeat units span residues 26–30, 31–35, 36–40, 57–61, 79–83, 99–103, 104–108, 109–113, 114–118, 120–124, 130–134, 140–144, 145–149, 150–154, 162–166, 172–176, 182–186, 187–191, 192–196, 197–201, 209–213, 219–223, 224–228, 243–247, and 250–254. Residues 26–254 form a 25 X 5 AA repeats of C-C-X(3) region; the sequence is CCEPPCCATS…VPVSSCCAPT (229 aa).

This sequence belongs to the KRTAP type 10 family. Interacts with hair keratins. In terms of tissue distribution, restricted to a narrow region of the hair fiber cuticle, lying approximately 20 cell layers above the apex of the dermal papilla of the hair root; not detected in any other tissues.

In terms of biological role, in the hair cortex, hair keratin intermediate filaments are embedded in an interfilamentous matrix, consisting of hair keratin-associated proteins (KRTAP), which are essential for the formation of a rigid and resistant hair shaft through their extensive disulfide bond cross-linking with abundant cysteine residues of hair keratins. The matrix proteins include the high-sulfur and high-glycine-tyrosine keratins. The polypeptide is Keratin-associated protein 10-9 (KRTAP10-9) (Homo sapiens (Human)).